The following is a 352-amino-acid chain: UDP-N-acetylglucosamine--N-acetylmuramyl-(pentapeptide) pyrophosphoryl-undecaprenol N-acetylglucosamine transferase (352 aa).

UDP-N-acetyl-alpha-D-glucosamine contacts are provided by residues 12–14, asparagine 124, arginine 160, serine 188, and glutamine 287; that span reads TGG.

The protein belongs to the glycosyltransferase 28 family. MurG subfamily.

The protein localises to the cell inner membrane. It catalyses the reaction di-trans,octa-cis-undecaprenyl diphospho-N-acetyl-alpha-D-muramoyl-L-alanyl-D-glutamyl-meso-2,6-diaminopimeloyl-D-alanyl-D-alanine + UDP-N-acetyl-alpha-D-glucosamine = di-trans,octa-cis-undecaprenyl diphospho-[N-acetyl-alpha-D-glucosaminyl-(1-&gt;4)]-N-acetyl-alpha-D-muramoyl-L-alanyl-D-glutamyl-meso-2,6-diaminopimeloyl-D-alanyl-D-alanine + UDP + H(+). The protein operates within cell wall biogenesis; peptidoglycan biosynthesis. Its function is as follows. Cell wall formation. Catalyzes the transfer of a GlcNAc subunit on undecaprenyl-pyrophosphoryl-MurNAc-pentapeptide (lipid intermediate I) to form undecaprenyl-pyrophosphoryl-MurNAc-(pentapeptide)GlcNAc (lipid intermediate II). The polypeptide is UDP-N-acetylglucosamine--N-acetylmuramyl-(pentapeptide) pyrophosphoryl-undecaprenol N-acetylglucosamine transferase (Dechloromonas aromatica (strain RCB)).